A 201-amino-acid polypeptide reads, in one-letter code: Segregation and condensation protein B (201 aa).

The protein belongs to the ScpB family. Homodimer. Homodimerization may be required to stabilize the binding of ScpA to the Smc head domains. Component of a cohesin-like complex composed of ScpA, ScpB and the Smc homodimer, in which ScpA and ScpB bind to the head domain of Smc. The presence of the three proteins is required for the association of the complex with DNA.

It is found in the cytoplasm. Functionally, participates in chromosomal partition during cell division. May act via the formation of a condensin-like complex containing Smc and ScpA that pull DNA away from mid-cell into both cell halves. This Enterococcus faecalis (strain ATCC 700802 / V583) protein is Segregation and condensation protein B.